The sequence spans 216 residues: Phosphatidylserine decarboxylase proenzyme (216 aa).

Ser-185 functions as the Schiff-base intermediate with substrate; via pyruvic acid in the catalytic mechanism. Ser-185 is modified (pyruvic acid (Ser); by autocatalysis).

It belongs to the phosphatidylserine decarboxylase family. PSD-A subfamily. As to quaternary structure, heterodimer of a large membrane-associated beta subunit and a small pyruvoyl-containing alpha subunit. The cofactor is pyruvate. In terms of processing, is synthesized initially as an inactive proenzyme. Formation of the active enzyme involves a self-maturation process in which the active site pyruvoyl group is generated from an internal serine residue via an autocatalytic post-translational modification. Two non-identical subunits are generated from the proenzyme in this reaction, and the pyruvate is formed at the N-terminus of the alpha chain, which is derived from the carboxyl end of the proenzyme. The post-translation cleavage follows an unusual pathway, termed non-hydrolytic serinolysis, in which the side chain hydroxyl group of the serine supplies its oxygen atom to form the C-terminus of the beta chain, while the remainder of the serine residue undergoes an oxidative deamination to produce ammonia and the pyruvoyl prosthetic group on the alpha chain.

It is found in the cell membrane. It carries out the reaction a 1,2-diacyl-sn-glycero-3-phospho-L-serine + H(+) = a 1,2-diacyl-sn-glycero-3-phosphoethanolamine + CO2. It functions in the pathway phospholipid metabolism; phosphatidylethanolamine biosynthesis; phosphatidylethanolamine from CDP-diacylglycerol: step 2/2. Its function is as follows. Catalyzes the formation of phosphatidylethanolamine (PtdEtn) from phosphatidylserine (PtdSer). This is Phosphatidylserine decarboxylase proenzyme from Nitrosomonas eutropha (strain DSM 101675 / C91 / Nm57).